The following is a 352-amino-acid chain: C-X-C chemokine receptor type 4 (352 aa).

The tract at residues 1–21 (MEGISIYTSDNYTEEMGSGDY) is important for chemokine binding and signaling. The Extracellular segment spans residues 1-38 (MEGISIYTSDNYTEEMGSGDYDSMKEPCFREENANFNK). At tyrosine 7 the chain carries Sulfotyrosine. Asparagine 11 is a glycosylation site (N-linked (GlcNAc...) asparagine). Sulfotyrosine is present on tyrosine 12. Residue serine 18 is glycosylated (O-linked (Xyl...) (chondroitin sulfate) serine). Tyrosine 21 carries the sulfotyrosine modification. Disulfide bonds link cysteine 28–cysteine 274 and cysteine 109–cysteine 186. A helical membrane pass occupies residues 39–63 (IFLPTIYSIIFLTGIVGNGLVILVM). At 64-77 (GYQKKLRSMTDKYR) the chain is on the cytoplasmic side. Residues 78–99 (LHLSVADLLFVITLPFWAVDAV) form a helical membrane-spanning segment. The tract at residues 94 to 97 (WAVD) is chemokine binding. Topologically, residues 100–110 (ANWYFGNFLCK) are extracellular. Residues 111 to 130 (AVHVIYTVNLYSSVLILAFI) traverse the membrane as a helical segment. Residues 113–117 (HVIYT) are chemokine binding. Residues 131–154 (SLDRYLAIVHATNSQRPRKLLAEK) are Cytoplasmic-facing. The short motif at 133 to 135 (DRY) is the Important for signaling element. Positions 135–147 (YLAIVHATNSQRP) are involved in dimerization; when bound to chemokine. Residues 155–174 (VVYVGVWIPALLLTIPDFIF) traverse the membrane as a helical segment. At 175-195 (ANVSEADDRYICDRFYPNDLW) the chain is on the extracellular side. The segment at 186–190 (CDRFY) is chemokine binding, important for signaling. The tract at residues 191–210 (PNDLWVVVFQFQHIMVGLIL) is involved in dimerization. Residues 196–216 (VVVFQFQHIMVGLILPGIVIL) form a helical membrane-spanning segment. At 217-241 (SCYCIIISKLSHSKGHQKRKALKTT) the chain is on the cytoplasmic side. The chain crosses the membrane as a helical span at residues 242–261 (VILILAFFACWLPYYIGISI). Residues 262–282 (DSFILLEIIKQGCEFENTVHK) are Extracellular-facing. The involved in dimerization stretch occupies residues 266-268 (LLE). A helical membrane pass occupies residues 283-302 (WISITEALAFFHCCLNPILY). The Cytoplasmic portion of the chain corresponds to 303 to 352 (AFLGAKFKTSAQHALTSVSRGSSLKILSKGKRGGHSSVSTESESSSFHSS). 2 positions are modified to phosphoserine: serine 319 and serine 321. Phosphoserine; by PKC and GRK6 occurs at positions 324 and 325. Residues 329-352 (LSKGKRGGHSSVSTESESSSFHSS) are disordered. Position 330 is a phosphoserine; by GRK6 (serine 330). Lysine 331 is covalently cross-linked (Glycyl lysine isopeptide (Lys-Gly) (interchain with G-Cter in ubiquitin)). Over residues 337 to 352 (HSSVSTESESSSFHSS) the composition is skewed to low complexity. Residue serine 339 is modified to Phosphoserine; by GRK6. Residues serine 348 and serine 351 each carry the phosphoserine modification.

This sequence belongs to the G-protein coupled receptor 1 family. Monomer. Can form homodimers. Interacts with CD164. Interacts with ARRB2; the interaction is dependent on the C-terminal phosphorylation of CXCR4 and allows activation of MAPK1 and MAPK3. Interacts with ARR3; the interaction is dependent on the C-terminal phosphorylation of CXCR4 and modulates calcium mobilization. Interacts with RNF113A; the interaction, enhanced by CXCL12, promotes CXCR4 ubiquitination and subsequent degradation. Interacts (via the cytoplasmic C-terminal) with ITCH (via the WW domains I and II); the interaction, enhanced by CXCL12, promotes CXCR4 ubiquitination and leads to its degradation. Interacts with extracellular ubiquitin. Interacts with DBN1; this interaction is enhanced by antigenic stimulation. Following LPS binding, may form a complex with GDF5, HSP90AA1 and HSPA8. Post-translationally, phosphorylated on agonist stimulation. Rapidly phosphorylated on serine and threonine residues in the C-terminal. Phosphorylation at Ser-324 and Ser-325 leads to recruitment of ITCH, ubiquitination and protein degradation. In terms of processing, ubiquitinated after ligand binding, leading to its degradation. Ubiquitinated by ITCH at the cell membrane on agonist stimulation. The ubiquitin-dependent mechanism, endosomal sorting complex required for transport (ESCRT), then targets CXCR4 for lysosomal degradation. This process is dependent also on prior Ser-/Thr-phosphorylation in the C-terminal of CXCR4. Also binding of ARRB1 to STAM negatively regulates CXCR4 sorting to lysosomes though modulating ubiquitination of SFR5S. Sulfation is required for efficient binding of CXCL12/SDF-1alpha and promotes its dimerization. Post-translationally, O- and N-glycosylated. N-glycosylation can mask coreceptor function. The O-glycosylation chondroitin sulfate attachment does not affect interaction with CXCL12/SDF-1alpha nor its coreceptor activity.

Its subcellular location is the cell membrane. It localises to the cell junction. The protein resides in the early endosome. The protein localises to the late endosome. It is found in the lysosome. Functionally, receptor for the C-X-C chemokine CXCL12/SDF-1 that transduces a signal by increasing intracellular calcium ion levels and enhancing MAPK1/MAPK3 activation. Involved in the AKT signaling cascade. Plays a role in regulation of cell migration, e.g. during wound healing. Acts as a receptor for extracellular ubiquitin; leading to enhanced intracellular calcium ions and reduced cellular cAMP levels. Binds bacterial lipopolysaccharide (LPS) et mediates LPS-induced inflammatory response, including TNF secretion by monocytes. Involved in hematopoiesis and in cardiac ventricular septum formation. Also plays an essential role in vascularization of the gastrointestinal tract, probably by regulating vascular branching and/or remodeling processes in endothelial cells. Involved in cerebellar development. In the CNS, could mediate hippocampal-neuron survival. This chain is C-X-C chemokine receptor type 4 (CXCR4), found in Pan troglodytes (Chimpanzee).